The primary structure comprises 348 residues: UPF0324 membrane protein BH02290 (348 aa).

Transmembrane regions (helical) follow at residues 13-35 (AFLN…AYGL), 45-67 (QAWL…CFTL), 74-96 (GITF…SISV), 106-128 (LLAS…GRLF), 135-157 (AMLV…APVI), 167-189 (SIAF…HPFL), 196-218 (YGVL…ASVS), 223-245 (QIAT…ALSI), 257-275 (LHTL…MLIR), 285-307 (LIPI…GLGV), and 319-341 (VILA…IQLN).

It belongs to the UPF0324 family.

The protein localises to the cell membrane. In Bartonella henselae (strain ATCC 49882 / DSM 28221 / CCUG 30454 / Houston 1) (Rochalimaea henselae), this protein is UPF0324 membrane protein BH02290.